Consider the following 71-residue polypeptide: Large ribosomal subunit protein bL31 (71 aa).

Positions 16, 18, 37, and 40 each coordinate Zn(2+).

It belongs to the bacterial ribosomal protein bL31 family. Type A subfamily. As to quaternary structure, part of the 50S ribosomal subunit. It depends on Zn(2+) as a cofactor.

Its function is as follows. Binds the 23S rRNA. In Sodalis glossinidius (strain morsitans), this protein is Large ribosomal subunit protein bL31.